The following is a 121-amino-acid chain: Fumarate reductase subunit D (121 aa).

Transmembrane regions (helical) follow at residues 22–42 (GVWF…LLPL), 57–77 (AFVS…LPMW), and 100–120 (YACY…VIQL).

Belongs to the FrdD family. In terms of assembly, part of an enzyme complex containing four subunits: a flavoprotein (FrdA), an iron-sulfur protein (FrdB), and two hydrophobic anchor proteins (FrdC and FrdD).

The protein localises to the cell inner membrane. Functionally, anchors the catalytic components of the fumarate reductase complex to the cell membrane, binds quinones. In Shewanella putrefaciens (strain CN-32 / ATCC BAA-453), this protein is Fumarate reductase subunit D.